The primary structure comprises 74 residues: Defensin-like protein P322 (74 aa).

An N-terminal signal peptide occupies residues 1-19; it reads MRFFATFFLLAMLVVATKM. Disulfide bonds link C30/C74, C41/C61, C47/C68, and C51/C70.

Belongs to the DEFL family. Protease inhibitor I18 (RTI/MTI-2) subfamily. In terms of tissue distribution, tuber.

Its subcellular location is the secreted. The polypeptide is Defensin-like protein P322 (Solanum tuberosum (Potato)).